The primary structure comprises 138 residues: MTNWINTVSRDHVEAGVRGRFTQANHGKPHMLRKMARGDWIVFYSPKTVYPDGEPLQAFTAIGQVADDEPYRAEMTPDFQPWRRKVDFLDCTQTPIRPLIDQLDFIEDKARWGYKFRFGVFKIDDHDLEVIRSAMTDS.

This sequence belongs to the UPF0310 family.

The chain is UPF0310 protein MAV_1800 from Mycobacterium avium (strain 104).